We begin with the raw amino-acid sequence, 234 residues long: Small ribosomal subunit protein uS2c (234 aa).

This sequence belongs to the universal ribosomal protein uS2 family.

It is found in the plastid. The protein resides in the chloroplast. In Pinus thunbergii (Japanese black pine), this protein is Small ribosomal subunit protein uS2c (rps2).